A 162-amino-acid chain; its full sequence is Probable chorismate pyruvate-lyase (162 aa).

Residues R54, L92, and E149 each coordinate substrate.

This sequence belongs to the UbiC family.

The protein resides in the cytoplasm. The catalysed reaction is chorismate = 4-hydroxybenzoate + pyruvate. It functions in the pathway cofactor biosynthesis; ubiquinone biosynthesis. In terms of biological role, removes the pyruvyl group from chorismate, with concomitant aromatization of the ring, to provide 4-hydroxybenzoate (4HB) for the ubiquinone pathway. This Methylococcus capsulatus (strain ATCC 33009 / NCIMB 11132 / Bath) protein is Probable chorismate pyruvate-lyase.